We begin with the raw amino-acid sequence, 338 residues long: uncharacterized protein (338 aa).

Residues 144–321 (HTLPVDVKAV…RAARVGLWAS (178 aa)) enclose the TNase-like domain. Active-site residues include arginine 228, glutamate 236, and arginine 270.

This is an uncharacterized protein from Capnoides sempervirens (Rock-harlequin).